A 146-amino-acid chain; its full sequence is Large ribosomal subunit protein mL41 (146 aa).

The N-terminal 16 residues, 1 to 16, are a transit peptide targeting the mitochondrion; that stretch reads MKGSPISQFSKTSINA.

Belongs to the mitochondrion-specific ribosomal protein mL41 family. Component of the mitochondrial large ribosomal subunit (mt-LSU). Mature yeast 74S mitochondrial ribosomes consist of a small (37S) and a large (54S) subunit. The 37S small subunit contains a 15S ribosomal RNA (15S mt-rRNA) and 34 different proteins. The 54S large subunit contains a 21S rRNA (21S mt-rRNA) and 46 different proteins.

It localises to the mitochondrion. Functionally, component of the mitochondrial ribosome (mitoribosome), a dedicated translation machinery responsible for the synthesis of mitochondrial genome-encoded proteins, including at least some of the essential transmembrane subunits of the mitochondrial respiratory chain. The mitoribosomes are attached to the mitochondrial inner membrane and translation products are cotranslationally integrated into the membrane. This is Large ribosomal subunit protein mL41 (MRPL27) from Saccharomyces cerevisiae (strain ATCC 204508 / S288c) (Baker's yeast).